The following is a 122-amino-acid chain: Large ribosomal subunit protein bL12 (122 aa).

This sequence belongs to the bacterial ribosomal protein bL12 family. In terms of assembly, homodimer. Part of the ribosomal stalk of the 50S ribosomal subunit. Forms a multimeric L10(L12)X complex, where L10 forms an elongated spine to which 2 to 4 L12 dimers bind in a sequential fashion. Binds GTP-bound translation factors.

Functionally, forms part of the ribosomal stalk which helps the ribosome interact with GTP-bound translation factors. Is thus essential for accurate translation. This is Large ribosomal subunit protein bL12 from Actinobacillus pleuropneumoniae serotype 5b (strain L20).